The primary structure comprises 385 residues: Trans-enoyl reductase poxH (385 aa).

Gln64–Ser67 contributes to the NADP(+) binding site. Pro156 to Ile163 lines the substrate pocket. NADP(+)-binding positions include Ser199 to Val202, Ser223 to Asp226, Tyr241, and Leu289 to Gly290. Residue His309 to Leu313 coordinates substrate. Lys372–Arg373 contributes to the NADP(+) binding site.

The protein belongs to the zinc-containing alcohol dehydrogenase family. As to quaternary structure, monomer.

It functions in the pathway secondary metabolite biosynthesis. Its function is as follows. Trans-enoyl reductase; part of the gene cluster that mediates the biosynthesis of oxaleimides, cytotoxic compounds containing an unusual disubstituted succinimide moiety. The first step of the pathway is provided by the HR-PKS poxF that serves in a new mode of collaborative biosynthesis with the PKS-NRPS poxE, by providing the olefin containing amino acid substrate via the synthesis of an ACP-bound dec-4-enoate. The cytochrome P450 monooxygenase poxM-catalyzed oxidation at the alpha-position creates the enzyme-bound 2-hydroxydec-4-enoyl-ACP thioester, which may be prone to spontaneous hydrolysis to yield 2-hydroxydec-4-enoic acid due to increased electrophilicity of the carbonyl. 2-hydroxydec-4-enoic acid can then be further oxidized by poxM to yield the alpha-ketoacid 2-oxodec-4-enoicacid, which is reductively aminated by the aminotransferase poxL to yield (S,E)-2-aminodec-4-enoic acid. The Hybrid PKS-NRPS synthetase poxE then performs condensation between the octaketide product of its PKS modules and the amino group of (S,E)-2-aminodec-4-enoic acid which is activated and incorporated by the adenylation domain. The resulting aminoacyl product can be cyclized by the Diels-Alderase PoxQ and reductively released by the reductive (R) domain of poxE to yield an aldehyde intermediate. The released aldehyde is then substrate for a Knoevenagel condensation by the hydrolyase poxO followed by an oxidation at the 5-position of the pyrrolidone ring. The presence of the olefin from the amino acid building block allows for migration of the substituted allyl group to occur. This allylic transposition reaction takes place in a conjugate addition, semipinacol-like fashion to yield a succinimide intermediate. Iterative two-electron oxidations of the C7 methyl of the succinimide intermediate to the carboxylic acid can be catalyzed by one of two remaining cytochrome P450 monooxygenasess poxC or poxD to yield oxaleimide A. Subsequent oxidation yields the maleimide scaffold oxaleimide I. Both oxaleimide A and oxaleimide I can undergo oxidative modifications in the decalin ring to yield the series of products oxaleimides B to H. The sequence is that of Trans-enoyl reductase poxH from Penicillium oxalicum.